Reading from the N-terminus, the 360-residue chain is MTATLQRRASANLWERFCAWITSTENRLYIGWFGVLMIPCLLTATCVFIIAFVAAPPVDIDGIREPVSGSLFYGNNIITGAVVPTSNAIGLHFYPIWEAASVDEWLYNGGPYQLIVLHFLIGVASYMGREWELSYRLGMRPWICVAFSAPVAAATAVFLIYPIGQGSFSDGMPLGISGTFNFMLVFQAEHNILMHPFHMAGVAGVFGGALFSAMHGSLVTSSLIRETSENESLNNGYKFGQEEETYNIVAAHGYFGRLIFQYASFNNSRSLHFFLGAWPVVGIWLTAIGISTMAFNLNGFNFNQSVVDSEGRVINTWADILNRANLGIEVMHERNAHNFPLDLASNSVVPVALTAPSVEA.

3 helical membrane-spanning segments follow: residues 29-46 (YIGW…TATC), 118-133 (HFLI…EWEL), and 142-156 (WICV…AATA). Residue histidine 118 coordinates chlorophyll a. Residue tyrosine 126 coordinates pheophytin a. Residues aspartate 170 and glutamate 189 each coordinate [CaMn4O5] cluster. Residues 197–218 (FHMAGVAGVFGGALFSAMHGSL) traverse the membrane as a helical segment. Histidine 198 lines the chlorophyll a pocket. A quinone-binding positions include histidine 215 and 264–265 (SF). Histidine 215 is a Fe cation binding site. Fe cation is bound at residue histidine 272. Residues 274-288 (FLGAWPVVGIWLTAI) form a helical membrane-spanning segment. [CaMn4O5] cluster contacts are provided by histidine 332, glutamate 333, aspartate 342, and alanine 344. The propeptide occupies 345–360 (SNSVVPVALTAPSVEA).

Belongs to the reaction center PufL/M/PsbA/D family. As to quaternary structure, PSII is composed of 1 copy each of membrane proteins PsbA, PsbB, PsbC, PsbD, PsbE, PsbF, PsbH, PsbI, PsbJ, PsbK, PsbL, PsbM, PsbT, PsbX, PsbY, PsbZ, Psb30/Ycf12, at least 3 peripheral proteins of the oxygen-evolving complex and a large number of cofactors. It forms dimeric complexes. The D1/D2 heterodimer binds P680, chlorophylls that are the primary electron donor of PSII, and subsequent electron acceptors. It shares a non-heme iron and each subunit binds pheophytin, quinone, additional chlorophylls, carotenoids and lipids. D1 provides most of the ligands for the Mn4-Ca-O5 cluster of the oxygen-evolving complex (OEC). There is also a Cl(-1) ion associated with D1 and D2, which is required for oxygen evolution. The PSII complex binds additional chlorophylls, carotenoids and specific lipids. is required as a cofactor. Tyr-161 forms a radical intermediate that is referred to as redox-active TyrZ, YZ or Y-Z. In terms of processing, C-terminally processed by CTPA; processing is essential to allow assembly of the oxygen-evolving complex and thus photosynthetic growth.

It is found in the plastid. The protein resides in the chloroplast thylakoid membrane. It carries out the reaction 2 a plastoquinone + 4 hnu + 2 H2O = 2 a plastoquinol + O2. Its function is as follows. Photosystem II (PSII) is a light-driven water:plastoquinone oxidoreductase that uses light energy to abstract electrons from H(2)O, generating O(2) and a proton gradient subsequently used for ATP formation. It consists of a core antenna complex that captures photons, and an electron transfer chain that converts photonic excitation into a charge separation. The D1/D2 (PsbA/PsbD) reaction center heterodimer binds P680, the primary electron donor of PSII as well as several subsequent electron acceptors. This chain is Photosystem II protein D1, found in Cyanidioschyzon merolae (strain NIES-3377 / 10D) (Unicellular red alga).